A 319-amino-acid chain; its full sequence is Annexin D4 (319 aa).

Annexin repeat units lie at residues 1–75 (MALP…EFSR) and 86–157 (HPWE…GLVS). G19, G21, and E72 together coordinate Ca(2+). T115 carries the post-translational modification Phosphothreonine. A phosphotyrosine mark is found at Y159 and Y211. Annexin repeat units follow at residues 169 to 240 (DSAK…ICLL) and 241 to 316 (KPAL…TLLS). S277 is modified (phosphoserine). Y287 is modified (phosphotyrosine).

It belongs to the annexin (TC 1.A.31.1) family. In terms of tissue distribution, expressed mainly in roots and flowers. Lower in stems and leaves.

In terms of biological role, may be involved in osmotic stress and abscisic acid signaling in a calcium-dependent manner. This is Annexin D4 (ANN4) from Arabidopsis thaliana (Mouse-ear cress).